The sequence spans 197 residues: dITP/XTP pyrophosphatase (197 aa).

8-13 (TGNAGK) is a binding site for substrate. Positions 40 and 69 each coordinate Mg(2+). The active-site Proton acceptor is aspartate 69. Substrate-binding positions include serine 70, 154–157 (FGYD), lysine 177, and 182–183 (HR).

This sequence belongs to the HAM1 NTPase family. Homodimer. The cofactor is Mg(2+).

It catalyses the reaction XTP + H2O = XMP + diphosphate + H(+). The catalysed reaction is dITP + H2O = dIMP + diphosphate + H(+). It carries out the reaction ITP + H2O = IMP + diphosphate + H(+). Its function is as follows. Pyrophosphatase that catalyzes the hydrolysis of nucleoside triphosphates to their monophosphate derivatives, with a high preference for the non-canonical purine nucleotides XTP (xanthosine triphosphate), dITP (deoxyinosine triphosphate) and ITP. Seems to function as a house-cleaning enzyme that removes non-canonical purine nucleotides from the nucleotide pool, thus preventing their incorporation into DNA/RNA and avoiding chromosomal lesions. The sequence is that of dITP/XTP pyrophosphatase (rdgB) from Salmonella typhi.